The primary structure comprises 1342 residues: DNA-directed RNA polymerase subunit beta (1342 aa).

An N6-acetyllysine mark is found at K1022 and K1200.

The protein belongs to the RNA polymerase beta chain family. As to quaternary structure, the RNAP catalytic core consists of 2 alpha, 1 beta, 1 beta' and 1 omega subunit. When a sigma factor is associated with the core the holoenzyme is formed, which can initiate transcription.

The catalysed reaction is RNA(n) + a ribonucleoside 5'-triphosphate = RNA(n+1) + diphosphate. In terms of biological role, DNA-dependent RNA polymerase catalyzes the transcription of DNA into RNA using the four ribonucleoside triphosphates as substrates. This Escherichia coli O139:H28 (strain E24377A / ETEC) protein is DNA-directed RNA polymerase subunit beta.